A 403-amino-acid polypeptide reads, in one-letter code: Phosphoserine phosphatase RsbP (403 aa).

Positions 1–42 (MDKQLNDAPCGFLALSEEGSIIAANRTLIKILDYEPEQVIGQ) constitute a PAS domain. Positions 191-402 (QVQIDSYYNA…DDECFILVDV (212 aa)) constitute a PPM-type phosphatase domain.

The cofactor is Mn(2+).

It carries out the reaction O-phospho-L-serine + H2O = L-serine + phosphate. It catalyses the reaction O-phospho-D-serine + H2O = D-serine + phosphate. Positive regulator of sigma-B activity. Dephosphorylates RsbV in response to energy stress. This Bacillus subtilis (strain 168) protein is Phosphoserine phosphatase RsbP (rsbP).